We begin with the raw amino-acid sequence, 174 residues long: N-terminal acetyltransferase B complex catalytic subunit NAA20 (174 aa).

The N-acetyltransferase domain maps to 2 to 151 (TTIRRFSCND…DGLDMRKALS (150 aa)).

The protein belongs to the acetyltransferase family. ARD1 subfamily.

It catalyses the reaction N-terminal L-methionyl-L-asparaginyl-[protein] + acetyl-CoA = N-terminal N(alpha)-acetyl-L-methionyl-L-asparaginyl-[protein] + CoA + H(+). The enzyme catalyses N-terminal L-methionyl-L-glutaminyl-[protein] + acetyl-CoA = N-terminal N(alpha)-acetyl-L-methionyl-L-glutaminyl-[protein] + CoA + H(+). The catalysed reaction is N-terminal L-methionyl-L-aspartyl-[protein] + acetyl-CoA = N-terminal N(alpha)-acetyl-L-methionyl-L-aspartyl-[protein] + CoA + H(+). It carries out the reaction N-terminal L-methionyl-L-glutamyl-[protein] + acetyl-CoA = N-terminal N(alpha)-acetyl-L-methionyl-L-glutamyl-[protein] + CoA + H(+). Its function is as follows. Catalytic subunit of the NatB N-alpha-acetyltransferase complex. Involved in plant immunity through the regulation of SNC1 stability. In Arabidopsis thaliana (Mouse-ear cress), this protein is N-terminal acetyltransferase B complex catalytic subunit NAA20.